Consider the following 116-residue polypeptide: NADH-ubiquinone oxidoreductase chain 3 (116 aa).

The next 3 membrane-spanning stretches (helical) occupy residues 4-24 (FMVM…LAFW), 56-76 (FFLV…LLPS), and 87-107 (FTLL…IYEW).

The protein belongs to the complex I subunit 3 family.

It localises to the mitochondrion membrane. The catalysed reaction is a ubiquinone + NADH + 5 H(+)(in) = a ubiquinol + NAD(+) + 4 H(+)(out). Core subunit of the mitochondrial membrane respiratory chain NADH dehydrogenase (Complex I) that is believed to belong to the minimal assembly required for catalysis. Complex I functions in the transfer of electrons from NADH to the respiratory chain. The immediate electron acceptor for the enzyme is believed to be ubiquinone. The polypeptide is NADH-ubiquinone oxidoreductase chain 3 (MT-ND3) (Petromyzon marinus (Sea lamprey)).